Reading from the N-terminus, the 107-residue chain is Large ribosomal subunit protein uL24 (107 aa).

The protein belongs to the universal ribosomal protein uL24 family. In terms of assembly, part of the 50S ribosomal subunit.

Its function is as follows. One of two assembly initiator proteins, it binds directly to the 5'-end of the 23S rRNA, where it nucleates assembly of the 50S subunit. One of the proteins that surrounds the polypeptide exit tunnel on the outside of the subunit. The polypeptide is Large ribosomal subunit protein uL24 (Neisseria meningitidis serogroup C (strain 053442)).